A 324-amino-acid chain; its full sequence is Hairy/enhancer-of-split related with YRPW motif protein 2 (324 aa).

A disordered region spans residues 1–34; the sequence is MKRPCEDSTSDSDMDETIDVGSENNYSGQSNGSF. Residues 8–18 show a composition bias toward acidic residues; it reads STSDSDMDETI. A compositionally biased stretch (polar residues) spans 22-34; it reads SENNYSGQSNGSF. A bHLH domain is found at 48 to 103; that stretch reads ARKKRRGIIEKRRRDRINNSLSELRRLVPTAFEKQGSAKLEKAEILQMTVDHLKML. In terms of domain architecture, Orange spans 122–157; that stretch reads LSIGFRECLTEVARYLSSVEGLDSSDPLRVRLVSHL. The span at 294 to 311 shows a compositional bias: low complexity; sequence SSSVSTSTTSQQSSGSSS. The disordered stretch occupies residues 294–324; the sequence is SSSVSTSTTSQQSSGSSSKPYRPWGTEVGAF. The YRPW motif motif lies at 314–317; sequence YRPW.

The protein belongs to the HEY family.

It is found in the nucleus. Functionally, transcriptional repressor. Downstream effector of Notch signaling which regulates cell fate choice in angioblasts. Represses the venous cell fate, thereby promoting the arterial cell fate and aorta formation. This Danio rerio (Zebrafish) protein is Hairy/enhancer-of-split related with YRPW motif protein 2 (hey2).